Here is a 120-residue protein sequence, read N- to C-terminus: NAD(P)H-quinone oxidoreductase subunit 3, chloroplastic (120 aa).

The next 3 helical transmembrane spans lie at 9 to 29, 64 to 84, and 88 to 108; these read IFWT…WISG, MFAL…PWAM, and VLGV…VVGL.

This sequence belongs to the complex I subunit 3 family. As to quaternary structure, NDH is composed of at least 16 different subunits, 5 of which are encoded in the nucleus.

It is found in the plastid. It localises to the chloroplast thylakoid membrane. It catalyses the reaction a plastoquinone + NADH + (n+1) H(+)(in) = a plastoquinol + NAD(+) + n H(+)(out). The enzyme catalyses a plastoquinone + NADPH + (n+1) H(+)(in) = a plastoquinol + NADP(+) + n H(+)(out). Its function is as follows. NDH shuttles electrons from NAD(P)H:plastoquinone, via FMN and iron-sulfur (Fe-S) centers, to quinones in the photosynthetic chain and possibly in a chloroplast respiratory chain. The immediate electron acceptor for the enzyme in this species is believed to be plastoquinone. Couples the redox reaction to proton translocation, and thus conserves the redox energy in a proton gradient. This is NAD(P)H-quinone oxidoreductase subunit 3, chloroplastic from Zea mays (Maize).